The sequence spans 3649 residues: N-(5-amino-5-carboxypentanoyl)-L-cysteinyl-D-valine synthase (3649 aa).

The tract at residues 401–861 (SRDRAYVTYT…LAGHLESQGH (461 aa)) is domain 1 (adipate-activating). 3 Carrier domains span residues 783-860 (APLL…ESQG), 1859-1936 (APVS…QAAA), and 2909-2984 (APRD…LSGL). 3 positions are modified to O-(pantetheine 4'-phosphoryl)serine: Ser-820, Ser-1896, and Ser-2944. The segment at 1014 to 1937 (HHIILDGWSL…QAEHIQAAAL (924 aa)) is domain 2 (cysteine-activating). Residues 2079 to 2985 (HHSCFDGWSW…FVDNVLSGLA (907 aa)) form a domain 3 (valine-activating) region. The For thioesterase activity role is filled by Ser-3502.

The protein belongs to the ATP-dependent AMP-binding enzyme family. It depends on pantetheine 4'-phosphate as a cofactor.

It carries out the reaction L-2-aminoadipate + L-valine + L-cysteine + 3 ATP + H2O = N-[(5S)-5-amino-5-carboxypentanoyl]-L-cysteinyl-D-valine + 3 AMP + 3 diphosphate + 3 H(+). It participates in antibiotic biosynthesis; penicillin G biosynthesis; penicillin G from L-alpha-aminoadipate and L-cysteine and L-valine: step 1/3. Each of the constituent amino acids of the tripeptide acv are activated as aminoacyl-adenylates with peptide bonds formed through the participation of amino acid thioester intermediates. The sequence is that of N-(5-amino-5-carboxypentanoyl)-L-cysteinyl-D-valine synthase (pcbAB) from Amycolatopsis lactamdurans (Nocardia lactamdurans).